A 753-amino-acid polypeptide reads, in one-letter code: 5-methyltetrahydropteroyltriglutamate--homocysteine methyltransferase (753 aa).

5-methyltetrahydropteroyltri-L-glutamate contacts are provided by residues 17–20 and lysine 117; that span reads RELK. Residues 431–433 and glutamate 484 contribute to the L-homocysteine site; that span reads IGS. L-methionine contacts are provided by residues 431-433 and glutamate 484; that span reads IGS. 5-methyltetrahydropteroyltri-L-glutamate-binding positions include 515–516 and tryptophan 561; that span reads RC. Aspartate 599 lines the L-homocysteine pocket. An L-methionine-binding site is contributed by aspartate 599. Glutamate 605 is a 5-methyltetrahydropteroyltri-L-glutamate binding site. Positions 641, 643, and 665 each coordinate Zn(2+). Residue histidine 694 is the Proton donor of the active site. Cysteine 726 is a Zn(2+) binding site.

Belongs to the vitamin-B12 independent methionine synthase family. As to quaternary structure, monomer. Zn(2+) serves as cofactor.

The enzyme catalyses 5-methyltetrahydropteroyltri-L-glutamate + L-homocysteine = tetrahydropteroyltri-L-glutamate + L-methionine. Its pathway is amino-acid biosynthesis; L-methionine biosynthesis via de novo pathway; L-methionine from L-homocysteine (MetE route): step 1/1. Its function is as follows. Catalyzes the transfer of a methyl group from 5-methyltetrahydrofolate to homocysteine resulting in methionine formation. The sequence is that of 5-methyltetrahydropteroyltriglutamate--homocysteine methyltransferase from Escherichia coli (strain K12).